The following is a 481-amino-acid chain: MNILRRGRLGSNVKEDVMKFTTSLEFDKEIFESDILCDIAHTTMLVEQNVISEENGKKIIAELKKIAEKGMETLDLDPSLDDIHMVIESELIKELGEDVAGRMHTGRSRNDEVATDLRLSLRKKVLEIITHLITMEKNMLAVSNEHKETLTVGYTHLQQAQPVTFGHQILSHISAIERDISRFFDTYNRINLSPLGCGAMATTGFNLNRKRTQELLGFYGLIENSMDGVSSRDFIVETMANISMLGTNLSKICEELVVFSSAEFNTIEIANEYTSTSSIMPQKKNPDVAEITRAKLSTLNGELVTVLTIMKALPNTYNRDLQEISPHLWKSVYTLIDSIQMVDGMISTVKVNKERMKENAEKNYSTATELADTLVRECGIAFRMAHGIVGELVKRSIEEKVEIKEIISEVLEKNNLSLSQEKIDTALDPFENVKLRNVIGGPAPEEVERAISSFNEKISAYKENLDEKIAEIESVKENLLK.

It belongs to the lyase 1 family. Argininosuccinate lyase subfamily.

Its subcellular location is the cytoplasm. It carries out the reaction 2-(N(omega)-L-arginino)succinate = fumarate + L-arginine. It functions in the pathway amino-acid biosynthesis; L-arginine biosynthesis; L-arginine from L-ornithine and carbamoyl phosphate: step 3/3. This is Argininosuccinate lyase from Methanococcus maripaludis (strain C5 / ATCC BAA-1333).